Consider the following 372-residue polypeptide: Carbamoyl phosphate synthase small chain (372 aa).

The CPSase stretch occupies residues 1-184 (MKAYIYLEND…SFQKFNDAKR (184 aa)). L-glutamine is bound by residues serine 45, glycine 240, and glycine 242. The 185-residue stretch at 188–372 (KVAVIDYGVK…YIFKEFMNLM (185 aa)) folds into the Glutamine amidotransferase type-1 domain. The Nucleophile role is filled by cysteine 268. Residues leucine 269, glutamine 272, asparagine 310, and tyrosine 313 each coordinate L-glutamine. Catalysis depends on residues histidine 351 and glutamate 353.

Belongs to the CarA family. In terms of assembly, composed of two chains; the small (or glutamine) chain promotes the hydrolysis of glutamine to ammonia, which is used by the large (or ammonia) chain to synthesize carbamoyl phosphate. Tetramer of heterodimers (alpha,beta)4.

It carries out the reaction hydrogencarbonate + L-glutamine + 2 ATP + H2O = carbamoyl phosphate + L-glutamate + 2 ADP + phosphate + 2 H(+). It catalyses the reaction L-glutamine + H2O = L-glutamate + NH4(+). Its pathway is amino-acid biosynthesis; L-arginine biosynthesis; carbamoyl phosphate from bicarbonate: step 1/1. The protein operates within pyrimidine metabolism; UMP biosynthesis via de novo pathway; (S)-dihydroorotate from bicarbonate: step 1/3. Its function is as follows. Small subunit of the glutamine-dependent carbamoyl phosphate synthetase (CPSase). CPSase catalyzes the formation of carbamoyl phosphate from the ammonia moiety of glutamine, carbonate, and phosphate donated by ATP, constituting the first step of 2 biosynthetic pathways, one leading to arginine and/or urea and the other to pyrimidine nucleotides. The small subunit (glutamine amidotransferase) binds and cleaves glutamine to supply the large subunit with the substrate ammonia. The protein is Carbamoyl phosphate synthase small chain of Campylobacter jejuni subsp. jejuni serotype O:2 (strain ATCC 700819 / NCTC 11168).